The primary structure comprises 112 residues: Prothymosin alpha-B (112 aa).

Residues 1–112 form a disordered region; that stretch reads MSDTAVDASV…TKKQKTDEDD (112 aa). Positions 9 to 35 are enriched in basic and acidic residues; sequence SVEKSTKDLKAKEKEVVEEAENGKDKP. 2 stretches are compositionally biased toward acidic residues: residues 41 to 83 and 92 to 101; these read ENEE…DEVE and EDDEDDDDDV. Positions 102–112 are enriched in basic and acidic residues; sequence ETKKQKTDEDD.

Belongs to the pro/parathymosin family.

It localises to the nucleus. The sequence is that of Prothymosin alpha-B (ptma-b) from Xenopus laevis (African clawed frog).